The following is a 316-amino-acid chain: DNA-directed RNA polymerase subunit alpha (316 aa).

Residues 1 to 232 (MSGNDLFPST…DLFNPLHHCS (232 aa)) are alpha N-terminal domain (alpha-NTD). The tract at residues 247–316 (KINDILVEEL…LNIYLPKEKY (70 aa)) is alpha C-terminal domain (alpha-CTD).

It belongs to the RNA polymerase alpha chain family. In terms of assembly, in plastids the minimal PEP RNA polymerase catalytic core is composed of four subunits: alpha, beta, beta', and beta''. When a (nuclear-encoded) sigma factor is associated with the core the holoenzyme is formed, which can initiate transcription.

It localises to the plastid. The protein resides in the chloroplast. It carries out the reaction RNA(n) + a ribonucleoside 5'-triphosphate = RNA(n+1) + diphosphate. Functionally, DNA-dependent RNA polymerase catalyzes the transcription of DNA into RNA using the four ribonucleoside triphosphates as substrates. This Mesostigma viride (Green alga) protein is DNA-directed RNA polymerase subunit alpha.